The primary structure comprises 142 residues: Transcriptional regulator MraZ (142 aa).

2 consecutive SpoVT-AbrB domains span residues 5–47 (THTP…PTPE) and 76–119 (AHDE…DRVA).

This sequence belongs to the MraZ family. As to quaternary structure, forms oligomers.

The protein localises to the cytoplasm. The protein resides in the nucleoid. In Salinispora tropica (strain ATCC BAA-916 / DSM 44818 / JCM 13857 / NBRC 105044 / CNB-440), this protein is Transcriptional regulator MraZ.